We begin with the raw amino-acid sequence, 517 residues long: Ribonuclease Y (517 aa).

A helical transmembrane segment spans residues 1–21 (MIESLIALIAAIVGLGIGYLV). Positions 207 to 273 (LINVINIKND…TKVIELLVED (67 aa)) constitute a KH domain. Positions 333-426 (ALAHSLEVAH…VCAADTLSAA (94 aa)) constitute an HD domain.

Belongs to the RNase Y family.

The protein localises to the cell membrane. Functionally, endoribonuclease that initiates mRNA decay. This is Ribonuclease Y from Campylobacter jejuni subsp. jejuni serotype O:23/36 (strain 81-176).